Consider the following 271-residue polypeptide: Acyl-[acyl-carrier-protein]--UDP-N-acetylglucosamine O-acyltransferase (271 aa).

It belongs to the transferase hexapeptide repeat family. LpxA subfamily. Homotrimer.

The protein localises to the cytoplasm. It carries out the reaction a (3R)-hydroxyacyl-[ACP] + UDP-N-acetyl-alpha-D-glucosamine = a UDP-3-O-[(3R)-3-hydroxyacyl]-N-acetyl-alpha-D-glucosamine + holo-[ACP]. The protein operates within glycolipid biosynthesis; lipid IV(A) biosynthesis; lipid IV(A) from (3R)-3-hydroxytetradecanoyl-[acyl-carrier-protein] and UDP-N-acetyl-alpha-D-glucosamine: step 1/6. Functionally, involved in the biosynthesis of lipid A, a phosphorylated glycolipid that anchors the lipopolysaccharide to the outer membrane of the cell. The chain is Acyl-[acyl-carrier-protein]--UDP-N-acetylglucosamine O-acyltransferase from Rhizobium rhizogenes (strain K84 / ATCC BAA-868) (Agrobacterium radiobacter).